A 224-amino-acid chain; its full sequence is 7-cyano-7-deazaguanine synthase (224 aa).

Residue 9 to 19 (ISGGMDSTLCA) participates in ATP binding. Zn(2+) contacts are provided by Cys190, Cys198, Cys201, and Cys204.

The protein belongs to the QueC family. Zn(2+) is required as a cofactor.

The catalysed reaction is 7-carboxy-7-deazaguanine + NH4(+) + ATP = 7-cyano-7-deazaguanine + ADP + phosphate + H2O + H(+). It participates in purine metabolism; 7-cyano-7-deazaguanine biosynthesis. Its function is as follows. Catalyzes the ATP-dependent conversion of 7-carboxy-7-deazaguanine (CDG) to 7-cyano-7-deazaguanine (preQ(0)). This is 7-cyano-7-deazaguanine synthase from Campylobacter jejuni (strain RM1221).